The following is a 208-amino-acid chain: Large ribosomal subunit protein uL3 (208 aa).

Gln-149 bears the N5-methylglutamine mark.

Belongs to the universal ribosomal protein uL3 family. As to quaternary structure, part of the 50S ribosomal subunit. Forms a cluster with proteins L14 and L19. Post-translationally, methylated by PrmB.

One of the primary rRNA binding proteins, it binds directly near the 3'-end of the 23S rRNA, where it nucleates assembly of the 50S subunit. In Mannheimia succiniciproducens (strain KCTC 0769BP / MBEL55E), this protein is Large ribosomal subunit protein uL3.